Here is a 74-residue protein sequence, read N- to C-terminus: Mitotic-spindle organizing protein 1 (74 aa).

This sequence belongs to the MOZART1 family. As to quaternary structure, part of the gamma-tubulin complex.

The protein resides in the cytoplasm. It localises to the cytoskeleton. The protein localises to the microtubule organizing center. Its subcellular location is the spindle pole body. Required for gamma-tubulin complex recruitment to the microtubule organizing center (MTOC). This Emericella nidulans (strain FGSC A4 / ATCC 38163 / CBS 112.46 / NRRL 194 / M139) (Aspergillus nidulans) protein is Mitotic-spindle organizing protein 1.